The sequence spans 393 residues: Flavohemoprotein (393 aa).

In terms of domain architecture, Globin spans 1–139 (MLSAEHRAIV…LADLLIGLEE (139 aa)). Histidine 85 is a heme b binding site. Catalysis depends on charge relay system residues tyrosine 95 and glutamate 138. The interval 150 to 393 (GGWRGTRAFV…EFFGPASALD (244 aa)) is reductase. Residues 153 to 256 (RGTRAFVVAR…LTPSGDFTLE (104 aa)) enclose the FAD-binding FR-type domain. FAD is bound by residues tyrosine 191 and 205–208 (RNYS). Residue 268–273 (GVGITP) participates in NADP(+) binding. Residue 385 to 388 (FFGP) coordinates FAD.

This sequence belongs to the globin family. Two-domain flavohemoproteins subfamily. In the C-terminal section; belongs to the flavoprotein pyridine nucleotide cytochrome reductase family. It depends on heme b as a cofactor. The cofactor is FAD.

The catalysed reaction is 2 nitric oxide + NADPH + 2 O2 = 2 nitrate + NADP(+) + H(+). It carries out the reaction 2 nitric oxide + NADH + 2 O2 = 2 nitrate + NAD(+) + H(+). Is involved in NO detoxification in an aerobic process, termed nitric oxide dioxygenase (NOD) reaction that utilizes O(2) and NAD(P)H to convert NO to nitrate, which protects the bacterium from various noxious nitrogen compounds. Therefore, plays a central role in the inducible response to nitrosative stress. The chain is Flavohemoprotein from Burkholderia sp. (strain TH2).